The primary structure comprises 658 residues: Exoribonuclease 2 (658 aa).

An RNB domain is found at 189-530 (REDLTSLYFT…VNHRLIKQVL (342 aa)). Residues 576-658 (AVEFDCEIAD…ETRSIVGNII (83 aa)) enclose the S1 motif domain.

It belongs to the RNR ribonuclease family. RNase II subfamily.

The protein resides in the cytoplasm. The enzyme catalyses Exonucleolytic cleavage in the 3'- to 5'-direction to yield nucleoside 5'-phosphates.. Involved in mRNA degradation. Hydrolyzes single-stranded polyribonucleotides processively in the 3' to 5' direction. The polypeptide is Exoribonuclease 2 (Actinobacillus pleuropneumoniae serotype 7 (strain AP76)).